We begin with the raw amino-acid sequence, 316 residues long: MSFASETKKELTNLEVKDCCAKAELSALIRMNGSLSFSNRHLVLDVQTENAAIARRIYTLLKKQYDVSVELLVRKKMRLKKNNVYIVRFSENAKLILEELKILGENFVFERNISEELVAKRCCKRSYMRGAFLAGGSVNNPETSSYHLEIFSLYKEHNDSLCALLNEFHLNSKTLERKKGYITYLKEAEKITEFLNVIGAHNSLLRFEDVRIVRDMRNSVNRLVNCETANLNKTIGASLRQVENIKYIDERIGLEALPEKLREIAQLRIDYQEVTLKELGEMVASGKISKSGINHRLRKLDEIAEQLRTGQSITLK.

The segment at residues 275–309 (TLKELGEMVASGKISKSGINHRLRKLDEIAEQLRT) is a DNA-binding region (H-T-H motif).

Belongs to the WhiA family.

Involved in cell division and chromosome segregation. The polypeptide is Probable cell division protein WhiA (Bacillus velezensis (strain DSM 23117 / BGSC 10A6 / LMG 26770 / FZB42) (Bacillus amyloliquefaciens subsp. plantarum)).